We begin with the raw amino-acid sequence, 128 residues long: Con-Ins F2c (128 aa).

The N-terminal stretch at 1–24 (MTTSSYFLLVALGLLLYVCRSSFG) is a signal peptide. 4 disulfide bridges follow: Cys-29-Cys-104, Cys-41-Cys-107, Cys-53-Cys-120, and Cys-106-Cys-111. A propeptide spans 59–89 (LQGGTGKKRGRASLLRKRRAFLSMLKARAKR) (c peptide). Glu-115 is modified (4-carboxyglutamate; partial). Ser-127 is subject to Serine amide.

This sequence belongs to the insulin family. Heterodimer of A and B chains; disulfide-linked. In terms of tissue distribution, expressed by the venom gland.

The protein resides in the secreted. This venom insulin facilitates prey capture by rapidly inducing hypoglycemic shock. Intraperitoneal injection of this peptide into zebrafish lowers blood glucose with the same potency than human insulin. In vivo, when applied to water, this peptide reduces overall locomotor activity of zebrafish larvae, observed as a significant decrease in the percentage of time spent swimming and movement frequency. The chain is Con-Ins F2c from Conus floridulus (Cone snail).